The sequence spans 454 residues: Bifunctional protein GlmU (454 aa).

The tract at residues Met1 to Arg227 is pyrophosphorylase. UDP-N-acetyl-alpha-D-glucosamine-binding positions include Leu9–Gly12, Lys23, Gln74, Gly79–Thr80, Tyr101–Asp103, Gly138, Glu152, Asn167, and Asn225. Asp103 contacts Mg(2+). Asn225 provides a ligand contact to Mg(2+). The tract at residues Leu228–Ala248 is linker. An N-acetyltransferase region spans residues Gly249–Lys454. 2 residues coordinate UDP-N-acetyl-alpha-D-glucosamine: Arg331 and Lys349. His361 (proton acceptor) is an active-site residue. Residues Tyr364 and Asn375 each coordinate UDP-N-acetyl-alpha-D-glucosamine. Residues Ala378, Asn384–Tyr385, Ser403, Ala421, and Arg438 each bind acetyl-CoA.

The protein in the N-terminal section; belongs to the N-acetylglucosamine-1-phosphate uridyltransferase family. This sequence in the C-terminal section; belongs to the transferase hexapeptide repeat family. As to quaternary structure, homotrimer. Mg(2+) serves as cofactor.

The protein resides in the cytoplasm. It catalyses the reaction alpha-D-glucosamine 1-phosphate + acetyl-CoA = N-acetyl-alpha-D-glucosamine 1-phosphate + CoA + H(+). It carries out the reaction N-acetyl-alpha-D-glucosamine 1-phosphate + UTP + H(+) = UDP-N-acetyl-alpha-D-glucosamine + diphosphate. The protein operates within nucleotide-sugar biosynthesis; UDP-N-acetyl-alpha-D-glucosamine biosynthesis; N-acetyl-alpha-D-glucosamine 1-phosphate from alpha-D-glucosamine 6-phosphate (route II): step 2/2. Its pathway is nucleotide-sugar biosynthesis; UDP-N-acetyl-alpha-D-glucosamine biosynthesis; UDP-N-acetyl-alpha-D-glucosamine from N-acetyl-alpha-D-glucosamine 1-phosphate: step 1/1. It participates in bacterial outer membrane biogenesis; LPS lipid A biosynthesis. Its function is as follows. Catalyzes the last two sequential reactions in the de novo biosynthetic pathway for UDP-N-acetylglucosamine (UDP-GlcNAc). The C-terminal domain catalyzes the transfer of acetyl group from acetyl coenzyme A to glucosamine-1-phosphate (GlcN-1-P) to produce N-acetylglucosamine-1-phosphate (GlcNAc-1-P), which is converted into UDP-GlcNAc by the transfer of uridine 5-monophosphate (from uridine 5-triphosphate), a reaction catalyzed by the N-terminal domain. This Actinobacillus succinogenes (strain ATCC 55618 / DSM 22257 / CCUG 43843 / 130Z) protein is Bifunctional protein GlmU.